The chain runs to 483 residues: MNIKTRFAPSPTGYLHIGNIRTALYAWLFARKQGGKFVLRIEDTNTVHLDNDEVIKNIISIMKWLRLDWDEGPYFQTKRLNRYNSIIYDMLQNNIAYRCFCSEERLSLLRLNQMKSGEKPKYDGRCRTICMFKNNAMLNTNRIIDSDKGSYVVRFCNPDVGKVSFYDQVRGMITFDNCELDDIIIQRSNGVPTYNFCVVVDDMDMNITHVVRGEEHINNTPRQINILKALRAEIPQYIHVPMILDQNRKKLSKRHGKSGIMQYRNDGFLPEAILNCLVRLGWSYGNQEIFSMDQMKKYFDFSEIHKSASVFDINKLMWFNHYYINHLPVNHIIKYLSEYIQIQNISDIDSVKLIDLVNLFSKRSHTLKEMIFNYRYLCKDFNIFEKKIAKKYLIPTMINPLKFFRKKLNNISNWTIKTVQTTIKETVHELNMNMNMVGMALRVALIGSDKSPSMSIVVYIIGKCQVLDRIDRAIDYINSLSHD.

The short motif at 9–19 (PSPTGYLHIGN) is the 'HIGH' region element. The 'KMSKS' region motif lies at 250-254 (KLSKR). ATP is bound at residue Lys-253.

The protein belongs to the class-I aminoacyl-tRNA synthetase family. Glutamate--tRNA ligase type 1 subfamily. In terms of assembly, monomer.

Its subcellular location is the cytoplasm. The catalysed reaction is tRNA(Glu) + L-glutamate + ATP = L-glutamyl-tRNA(Glu) + AMP + diphosphate. Functionally, catalyzes the attachment of glutamate to tRNA(Glu) in a two-step reaction: glutamate is first activated by ATP to form Glu-AMP and then transferred to the acceptor end of tRNA(Glu). This is Glutamate--tRNA ligase from Blochmanniella floridana.